Consider the following 536-residue polypeptide: Formate--tetrahydrofolate ligase (536 aa).

51–58 (TPAGEGKT) contacts ATP.

The protein belongs to the formate--tetrahydrofolate ligase family.

It catalyses the reaction (6S)-5,6,7,8-tetrahydrofolate + formate + ATP = (6R)-10-formyltetrahydrofolate + ADP + phosphate. It functions in the pathway one-carbon metabolism; tetrahydrofolate interconversion. This chain is Formate--tetrahydrofolate ligase, found in Thermoplasma acidophilum (strain ATCC 25905 / DSM 1728 / JCM 9062 / NBRC 15155 / AMRC-C165).